Consider the following 291-residue polypeptide: Homoserine kinase (291 aa).

ATP is bound at residue 80–90 (RPSSGLGSSAA).

This sequence belongs to the GHMP kinase family. Homoserine kinase subfamily.

It localises to the cytoplasm. It carries out the reaction L-homoserine + ATP = O-phospho-L-homoserine + ADP + H(+). It functions in the pathway amino-acid biosynthesis; L-threonine biosynthesis; L-threonine from L-aspartate: step 4/5. Catalyzes the ATP-dependent phosphorylation of L-homoserine to L-homoserine phosphate. The sequence is that of Homoserine kinase from Haloquadratum walsbyi (strain DSM 16790 / HBSQ001).